A 423-amino-acid polypeptide reads, in one-letter code: Anhydromevalonate phosphate decarboxylase (423 aa).

Mn(2+)-binding residues include Asn-134 and Glu-197. The active-site Proton acceptor is the Asp-245.

The protein belongs to the UbiD family. Prenylated FMN is required as a cofactor. It depends on Mn(2+) as a cofactor.

It carries out the reaction (2E)-3-methyl-5-phosphooxypent-2-enoate + H(+) = isopentenyl phosphate + CO2. It functions in the pathway isoprenoid biosynthesis; isopentenyl diphosphate biosynthesis via mevalonate pathway. Functionally, catalyzes the conversion of trans-anhydromevalonate 5-phosphate (tAHMP) into isopentenyl phosphate. Involved in the archaeal mevalonate (MVA) pathway, which provides fundamental precursors for isoprenoid biosynthesis, such as isopentenyl diphosphate (IPP) and dimethylallyl diphosphate (DMAPP). In Methanothermobacter thermautotrophicus (strain ATCC 29096 / DSM 1053 / JCM 10044 / NBRC 100330 / Delta H) (Methanobacterium thermoautotrophicum), this protein is Anhydromevalonate phosphate decarboxylase.